A 356-amino-acid polypeptide reads, in one-letter code: Probable arabinogalactan endo-beta-1,4-galactanase A (356 aa).

A signal peptide spans 1–21; it reads MLGKMILLPLFVLLCHSLASA. An N-linked (GlcNAc...) asparagine glycan is attached at N133. E157 (proton donor) is an active-site residue. The active-site Nucleophile is E268.

Belongs to the glycosyl hydrolase 53 family.

Its subcellular location is the secreted. The enzyme catalyses The enzyme specifically hydrolyzes (1-&gt;4)-beta-D-galactosidic linkages in type I arabinogalactans.. In terms of biological role, endogalactanase involved in the degradation of plant cell wall polysaccharides, and more particularly of hairy regions of pectin. The chain is Probable arabinogalactan endo-beta-1,4-galactanase A (galA) from Neosartorya fischeri (strain ATCC 1020 / DSM 3700 / CBS 544.65 / FGSC A1164 / JCM 1740 / NRRL 181 / WB 181) (Aspergillus fischerianus).